Reading from the N-terminus, the 68-residue chain is Large ribosomal subunit protein uL29 (68 aa).

This sequence belongs to the universal ribosomal protein uL29 family.

This is Large ribosomal subunit protein uL29 from Chlorobaculum tepidum (strain ATCC 49652 / DSM 12025 / NBRC 103806 / TLS) (Chlorobium tepidum).